A 231-amino-acid polypeptide reads, in one-letter code: Large ribosomal subunit protein uL1 (231 aa).

This sequence belongs to the universal ribosomal protein uL1 family. In terms of assembly, part of the 50S ribosomal subunit.

Its function is as follows. Binds directly to 23S rRNA. The L1 stalk is quite mobile in the ribosome, and is involved in E site tRNA release. Protein L1 is also a translational repressor protein, it controls the translation of the L11 operon by binding to its mRNA. The polypeptide is Large ribosomal subunit protein uL1 (Neisseria meningitidis serogroup A / serotype 4A (strain DSM 15465 / Z2491)).